Reading from the N-terminus, the 216-residue chain is Maleylacetoacetate isomerase (216 aa).

Position 1 is an N-acetylmethionine (Met1). In terms of domain architecture, GST N-terminal spans 4 to 87 (GKPILYSYFR…YLEETRPIPR (84 aa)). Glutathione-binding positions include 14-19 (SSCSWR) and Gln45. Lys57 carries the N6-succinyllysine modification. Residues Val59, 71–72 (QS), Gln111, and 115–117 (NLS) contribute to the glutathione site. The region spanning 92–212 (DPQKRAIVRM…HPRRQPDTPA (121 aa)) is the GST C-terminal domain. Residue Thr136 is modified to Phosphothreonine. A Phosphoserine modification is found at Ser137. Lys177 is modified (N6-succinyllysine). Position 181 is a phosphoserine (Ser181).

This sequence belongs to the GST superfamily. Zeta family. As to quaternary structure, homodimer. Requires glutathione as cofactor. In terms of tissue distribution, expressed in liver, kidney, seminal glands and breast.

It localises to the cytoplasm. The enzyme catalyses 4-maleylacetoacetate = 4-fumarylacetoacetate. It carries out the reaction RX + glutathione = an S-substituted glutathione + a halide anion + H(+). It functions in the pathway amino-acid degradation; L-phenylalanine degradation; acetoacetate and fumarate from L-phenylalanine: step 5/6. Its function is as follows. Probable bifunctional enzyme showing minimal glutathione-conjugating activity with ethacrynic acid and 7-chloro-4-nitrobenz-2-oxa-1, 3-diazole and maleylacetoacetate isomerase activity. Also has low glutathione peroxidase activity with t-butyl and cumene hydroperoxides. Is able to catalyze the glutathione dependent oxygenation of dichloroacetic acid to glyoxylic acid. This Mus musculus (Mouse) protein is Maleylacetoacetate isomerase (Gstz1).